The primary structure comprises 449 residues: Histone PARylation factor 1-like (449 aa).

The CCHC-type zinc-finger motif lies at 3-28 (KEDCKYWDKCYQQNPAHLSKYNHPKK). Positions 18–93 (AHLSKYNHPK…AKGSYEAETE (76 aa)) are disordered. 2 stretches are compositionally biased toward basic and acidic residues: residues 28–41 (KQQE…EGKK) and 54–69 (EQKK…KDKS). At S72 the chain carries Phosphoserine. The active-site Proton donor is the E384.

This sequence belongs to the HPF1 family.

The protein resides in the chromosome. The protein localises to the nucleus. Functionally, cofactor for serine ADP-ribosylation that confers serine specificity on Parp. Switches the amino acid specificity of Parp from aspartate or glutamate to serine residues. Acts by completing the active site of Parp: forms a composite active site composed of residues from HPF1/CG1218 and Parp. This chain is Histone PARylation factor 1-like, found in Drosophila melanogaster (Fruit fly).